An 80-amino-acid polypeptide reads, in one-letter code: RNA-binding protein KhpA (80 aa).

The region spanning 33–80 (LEILQLRVASEDVGKVIGKHGRIARALRTLLSASAHASQTRYALEIID) is the KH domain.

It belongs to the KhpA RNA-binding protein family. As to quaternary structure, forms a complex with KhpB.

The protein localises to the cytoplasm. Functionally, a probable RNA chaperone. Forms a complex with KhpB which binds to cellular RNA and controls its expression. Plays a role in peptidoglycan (PG) homeostasis and cell length regulation. The chain is RNA-binding protein KhpA from Treponema pallidum (strain Nichols).